Here is a 246-residue protein sequence, read N- to C-terminus: Small ribosomal subunit protein uS3 (246 aa).

The region spanning 38-106 (IRQYLNARLA…DVQINIYEIR (69 aa)) is the KH type-2 domain. Residues 218–246 (VAKNQSRRPNAQGGNNRGGDRNRRRKGNR) are disordered.

This sequence belongs to the universal ribosomal protein uS3 family. Part of the 30S ribosomal subunit. Forms a tight complex with proteins S10 and S14.

Its function is as follows. Binds the lower part of the 30S subunit head. Binds mRNA in the 70S ribosome, positioning it for translation. The chain is Small ribosomal subunit protein uS3 from Porphyromonas gingivalis (strain ATCC 33277 / DSM 20709 / CIP 103683 / JCM 12257 / NCTC 11834 / 2561).